The following is a 219-amino-acid chain: Large ribosomal subunit protein uL3 (219 aa).

Disordered stretches follow at residues 62–81 and 136–156; these read DSRSSKYANKPAEGHAKKAG and QARGPMSHGSHFHRAPGSVGM.

It belongs to the universal ribosomal protein uL3 family. Part of the 50S ribosomal subunit. Forms a cluster with proteins L14 and L19.

In terms of biological role, one of the primary rRNA binding proteins, it binds directly near the 3'-end of the 23S rRNA, where it nucleates assembly of the 50S subunit. The chain is Large ribosomal subunit protein uL3 from Staphylococcus saprophyticus subsp. saprophyticus (strain ATCC 15305 / DSM 20229 / NCIMB 8711 / NCTC 7292 / S-41).